Here is a 549-residue protein sequence, read N- to C-terminus: Dihydroxy-acid dehydratase (549 aa).

Residue aspartate 78 participates in Mg(2+) binding. Residue cysteine 119 coordinates [2Fe-2S] cluster. Aspartate 120 and lysine 121 together coordinate Mg(2+). The residue at position 121 (lysine 121) is an N6-carboxylysine. Position 192 (cysteine 192) interacts with [2Fe-2S] cluster. Glutamate 439 lines the Mg(2+) pocket. The Proton acceptor role is filled by serine 465.

The protein belongs to the IlvD/Edd family. Homodimer. [2Fe-2S] cluster is required as a cofactor. Requires Mg(2+) as cofactor.

It carries out the reaction (2R)-2,3-dihydroxy-3-methylbutanoate = 3-methyl-2-oxobutanoate + H2O. The enzyme catalyses (2R,3R)-2,3-dihydroxy-3-methylpentanoate = (S)-3-methyl-2-oxopentanoate + H2O. It functions in the pathway amino-acid biosynthesis; L-isoleucine biosynthesis; L-isoleucine from 2-oxobutanoate: step 3/4. The protein operates within amino-acid biosynthesis; L-valine biosynthesis; L-valine from pyruvate: step 3/4. Its function is as follows. Functions in the biosynthesis of branched-chain amino acids. Catalyzes the dehydration of (2R,3R)-2,3-dihydroxy-3-methylpentanoate (2,3-dihydroxy-3-methylvalerate) into 2-oxo-3-methylpentanoate (2-oxo-3-methylvalerate) and of (2R)-2,3-dihydroxy-3-methylbutanoate (2,3-dihydroxyisovalerate) into 2-oxo-3-methylbutanoate (2-oxoisovalerate), the penultimate precursor to L-isoleucine and L-valine, respectively. In Endomicrobium trichonymphae, this protein is Dihydroxy-acid dehydratase.